The following is a 402-amino-acid chain: APO protein 3, mitochondrial (402 aa).

The transit peptide at 1–13 (MQRRKLVEISIFV) directs the protein to the mitochondrion. The disordered stretch occupies residues 37 to 59 (NDEDPLYADVPKPPKDKSERKPY). Over residues 48-58 (KPPKDKSERKP) the composition is skewed to basic and acidic residues. APO domains follow at residues 127–213 (RCRL…DLEK) and 294–380 (TCGY…PVPD).

Belongs to the APO family.

Its subcellular location is the mitochondrion. Functionally, may be involved in the stable assembly of several 4Fe-4S cluster-containing complexes of mitochondria. This Arabidopsis thaliana (Mouse-ear cress) protein is APO protein 3, mitochondrial (APO3).